Reading from the N-terminus, the 532-residue chain is Undecaprenyl-phosphate glucose phosphotransferase (532 aa).

The next 5 helical transmembrane spans lie at Gln81–Trp101, Glu110–Pro130, Val155–Val175, Trp183–His203, and Thr344–Ile364.

Belongs to the bacterial sugar transferase family.

The protein resides in the membrane. It catalyses the reaction di-trans,octa-cis-undecaprenyl phosphate + UDP-alpha-D-glucose = alpha-D-glucosyl di-trans,octa-cis-undecaprenyl diphosphate + UMP. In terms of biological role, involved in the biosynthesis of the exopolysaccharide acetan, a water-soluble polysaccharide involved in production of bacterial cellulose (BC). In Komagataeibacter xylinus (Gluconacetobacter xylinus), this protein is Undecaprenyl-phosphate glucose phosphotransferase (aceA).